The primary structure comprises 114 residues: UPF0102 protein HPG27_782 (114 aa).

Belongs to the UPF0102 family.

The polypeptide is UPF0102 protein HPG27_782 (Helicobacter pylori (strain G27)).